The sequence spans 494 residues: 1-aminocyclopropane-1-carboxylate synthase 2 (494 aa).

At Lys-279 the chain carries N6-(pyridoxal phosphate)lysine. Residues 474–494 (NVLNSPHTMSPHSPLVRARTY) are disordered. The segment covering 475–484 (VLNSPHTMSP) has biased composition (polar residues).

This sequence belongs to the class-I pyridoxal-phosphate-dependent aminotransferase family. As to quaternary structure, homodimer. Pyridoxal 5'-phosphate is required as a cofactor.

The catalysed reaction is S-adenosyl-L-methionine = 1-aminocyclopropane-1-carboxylate + S-methyl-5'-thioadenosine + H(+). Its pathway is alkene biosynthesis; ethylene biosynthesis via S-adenosyl-L-methionine; ethylene from S-adenosyl-L-methionine: step 1/2. Functionally, catalyzes the formation of 1-aminocyclopropane-1-carboxylate, a direct precursor of ethylene in higher plants. This Cucurbita pepo (Vegetable marrow) protein is 1-aminocyclopropane-1-carboxylate synthase 2 (ACS2).